A 421-amino-acid polypeptide reads, in one-letter code: Ethanolamine-phosphate cytidylyltransferase (421 aa).

A helical membrane pass occupies residues I8 to L28. The disordered stretch occupies residues S203–A227. Residues R204–H215 show a composition bias toward polar residues. CTP is bound by residues A262–F263, H270–I273, R298, H346–V349, and S377–I381. Positions A402–D421 are disordered. Over residues K403 to E413 the composition is skewed to basic and acidic residues. A Phosphoserine modification is found at S416.

The protein belongs to the cytidylyltransferase family. Expressed in root tip, lateral root primordia, leaves, shoot apex, stem vascular bundles, pollen and embryos.

The protein localises to the mitochondrion outer membrane. It catalyses the reaction phosphoethanolamine + CTP + H(+) = CDP-ethanolamine + diphosphate. It participates in phospholipid metabolism; phosphatidylethanolamine biosynthesis; phosphatidylethanolamine from ethanolamine: step 2/3. Functionally, plays an important role in the biosynthesis of the phospholipid phosphatidylethanolamine. Catalyzes the formation of CDP-ethanolamine. Essential for early embryonic development. This Arabidopsis thaliana (Mouse-ear cress) protein is Ethanolamine-phosphate cytidylyltransferase.